The primary structure comprises 72 residues: uncharacterized protein (72 aa).

A disordered region spans residues 15-62 (NNNYNNNNNNNNNNNNNNNNNNNNNNNNNNININNNNNNNNNNNNNNN).

This is an uncharacterized protein from Dictyostelium discoideum (Social amoeba).